The primary structure comprises 677 residues: Sulfate transporter 2.1 (677 aa).

The Cytoplasmic portion of the chain corresponds to 1–118 (MKERDSESFE…NYKLTMFKND (118 aa)). Positions 23–54 (STHMIQMAMANSGSSAAAQAGQDQPDRSKWLL) are disordered. Residues 28-44 (QMAMANSGSSAAAQAGQ) show a composition bias toward low complexity. Residues 119 to 139 (LMAGLTLASLCIPQSIGYATL) form a helical membrane-spanning segment. Residues 140–141 (AK) lie on the Extracellular side of the membrane. Residues 142-162 (LDPQYGLYTSVVPPLIYALMG) traverse the membrane as a helical segment. Residues 163-166 (TSRE) lie on the Cytoplasmic side of the membrane. A helical transmembrane segment spans residues 167–187 (IAIGPVAVVSLLISSMLQKLI). Over 188-198 (DPETDPLGYKK) the chain is Extracellular. A helical transmembrane segment spans residues 199-219 (LVLTTTFFAGIFQASFGLFRL). The Cytoplasmic segment spans residues 220-221 (GF). A helical transmembrane segment spans residues 222 to 242 (LVDFLSHAAIVGFMGGAAIVI). The Extracellular segment spans residues 243-278 (GLQQLKGLLGITNFTTNTDIVSVLRAVWRSCQQQWS). A glycan (N-linked (GlcNAc...) asparagine) is linked at asparagine 255. The helical transmembrane segment at 279 to 299 (PHTFILGCSFLSFILITRFIG) threads the bilayer. The Cytoplasmic portion of the chain corresponds to 300–304 (KKYKK). The helical transmembrane segment at 305-325 (LFWLPAIAPLIAVVVSTLMVF) threads the bilayer. The Extracellular segment spans residues 326–360 (LTKADEHGVKTVRHIKGGLNPMSIQDLDFNTPHLG). A helical transmembrane segment spans residues 361–381 (QIAKIGLIIAIVALTEAIAVG). Residues 382 to 397 (RSFAGIKGYRLDGNKE) are Cytoplasmic-facing. Residues 398 to 418 (MVAIGFMNVLGSFTSCYAATG) traverse the membrane as a helical segment. The Extracellular portion of the chain corresponds to 419 to 426 (SFSRTAVN). A helical transmembrane segment spans residues 427–447 (FAAGCETAMSNIVMAVTVFVA). At 448-454 (LECLTRL) the chain is on the cytoplasmic side. The helical transmembrane segment at 455–475 (LYYTPIAILASIILSALPGLI) threads the bilayer. Residues 476 to 490 (NINEAIHIWKVDKFD) are Extracellular-facing. The chain crosses the membrane as a helical span at residues 491–511 (FLALIGAFFGVLFASVEIGLL). Residues 512-677 (VAVVISFAKI…ALDACFGLKV (166 aa)) are Cytoplasmic-facing. The STAS domain occupies 548-672 (YPMTVKTPGV…LTIGEALDAC (125 aa)).

Belongs to the SLC26A/SulP transporter (TC 2.A.53) family. As to expression, expressed in root cap, central cylinder of roots and in vascular tissues of leaves.

The protein localises to the membrane. In terms of biological role, low-affinity H(+)/sulfate cotransporter that may be involved in root-to-shoot translocation of sulfate. Plays a central role in the regulation of sulfate assimilation. This is Sulfate transporter 2.1 (SULTR2;1) from Arabidopsis thaliana (Mouse-ear cress).